The following is a 363-amino-acid chain: Mannose-1-phosphate guanyltransferase (363 aa).

It belongs to the transferase hexapeptide repeat family.

It is found in the cytoplasm. It catalyses the reaction alpha-D-mannose 1-phosphate + GTP + H(+) = GDP-alpha-D-mannose + diphosphate. The protein operates within nucleotide-sugar biosynthesis; GDP-alpha-D-mannose biosynthesis; GDP-alpha-D-mannose from alpha-D-mannose 1-phosphate (GTP route): step 1/1. Its function is as follows. Involved in cell wall synthesis where it is required for glycosylation. Involved in cell cycle progression through cell-size checkpoint. Required for the correct assembly of the septum. In Schizosaccharomyces pombe (strain 972 / ATCC 24843) (Fission yeast), this protein is Mannose-1-phosphate guanyltransferase (mpg1).